Here is a 475-residue protein sequence, read N- to C-terminus: MSPQTETKAGVGFKAGVKDYRLTYYTPEYETKETDILAAFRMTPQPGVPPEEAGAAVAAESSTGTWTTVWTDGLTSLDRYKGRCYDIEPVAGEENQYIAYVAYPLDLFEEGSVTNLFTSIVGNVFGFKALRALRLEDLRIPPSYVKTFQGPPHGIQVERDKLNKYGRPLLGCTIKPKLGLSAKNYGRAVYECLRGGLDFTKDDENVNSQPFMRWRDRFLFVAEAIFKSQAETGEIKGHYSNATAGTSEEMLKRAACARELGVPIIMHDYLTGGFTANTSLAHYCRDNGLLLHIHRAMHAVIDRQKNHGMHFRVLAKASRLSGGDHIHAGTVVGKLEGEREVTSGFVDSLRDDYIERDRSRGIYFTQDWVSLPGVLPVASGGIHVWHMPALTEIFGDDSVLQFGGGTLGHPWGNAPGAVANRVASEACVQARNEGRDLAREGNEVIREASKWSPDLAAACEVWKEIKFEYETIDTL.

A propeptide spanning residues 1-2 is cleaved from the precursor; sequence MS. An N-acetylproline modification is found at Pro-3. Lys-14 bears the N6,N6,N6-trimethyllysine mark. Substrate is bound by residues Asn-123 and Thr-173. The active-site Proton acceptor is Lys-175. Substrate is bound at residue Lys-177. Lys-201, Asp-203, and Glu-204 together coordinate Mg(2+). The residue at position 201 (Lys-201) is an N6-carboxylysine. The active-site Proton acceptor is the His-294. Substrate contacts are provided by Arg-295, His-327, and Ser-379.

The protein belongs to the RuBisCO large chain family. Type I subfamily. Heterohexadecamer of 8 large chains and 8 small chains. Mg(2+) is required as a cofactor.

The protein localises to the plastid. The catalysed reaction is 2 (2R)-3-phosphoglycerate + 2 H(+) = D-ribulose 1,5-bisphosphate + CO2 + H2O. It carries out the reaction D-ribulose 1,5-bisphosphate + O2 = 2-phosphoglycolate + (2R)-3-phosphoglycerate + 2 H(+). Functionally, ruBisCO catalyzes two reactions: the carboxylation of D-ribulose 1,5-bisphosphate, the primary event in carbon dioxide fixation, as well as the oxidative fragmentation of the pentose substrate in the photorespiration process. Both reactions occur simultaneously and in competition at the same active site. The chain is Ribulose bisphosphate carboxylase large chain from Aneura mirabilis (Parasitic liverwort).